Here is a 490-residue protein sequence, read N- to C-terminus: GTPase Der (490 aa).

EngA-type G domains follow at residues 3–166 (PVVA…AEAM) and 200–373 (IKLA…DSAT). Residues 9 to 16 (GRPNVGKS), 56 to 60 (DTGGI), 118 to 121 (NKVD), 206 to 213 (GKPNVGKS), 253 to 257 (DTAGV), and 318 to 321 (NKWD) each bind GTP. The region spanning 374 to 458 (RRVSTSMLTR…PIQLRFQEGG (85 aa)) is the KH-like domain.

It belongs to the TRAFAC class TrmE-Era-EngA-EngB-Septin-like GTPase superfamily. EngA (Der) GTPase family. As to quaternary structure, associates with the 50S ribosomal subunit.

GTPase that plays an essential role in the late steps of ribosome biogenesis. This is GTPase Der from Shewanella halifaxensis (strain HAW-EB4).